The primary structure comprises 98 residues: U-scoloptoxin(16)-Er9a (98 aa).

An N-terminal signal peptide occupies residues 1–24 (MVSYLCMSVSSGWLSIGKIAIKDG).

This sequence belongs to the scoloptoxin-16 family. In terms of processing, contains 4 disulfide bonds. As to expression, expressed by the venom gland.

It localises to the secreted. The protein is U-scoloptoxin(16)-Er9a of Ethmostigmus rubripes (Giant centipede).